A 461-amino-acid polypeptide reads, in one-letter code: Threonine/serine transporter ThrP (461 aa).

12 consecutive transmembrane segments (helical) span residues 17–37 (IELI…AAST), 40–60 (WAGP…FFIM), 97–117 (WFMW…YVQF), 123–143 (AQWI…LAAV), 156–176 (IKVT…FFGF), 201–221 (GFLT…LIGI), 244–264 (ILIF…WNEI), 278–298 (IGIT…ALSG), 333–353 (VAGV…NYII), 360–380 (FVYV…VILI), 401–421 (IMFP…LIGM), and 430–450 (SLFV…VFGL).

Belongs to the amino acid-polyamine-organocation (APC) superfamily.

It is found in the cell inner membrane. It catalyses the reaction L-threonine(in) + H(+)(in) = L-threonine(out) + H(+)(out). It carries out the reaction L-serine(in) + H(+)(in) = L-serine(out) + H(+)(out). Permease that mediates the proton-dependent threonine and serine uptake. In Salmonella typhi, this protein is Threonine/serine transporter ThrP.